Reading from the N-terminus, the 351-residue chain is MRETESNNKVLLGMSGGTDSSVAALLLQDAGYEVTGITFRFYEKENDTEYLEDARALCERLNIPHLTYDVRDTFRKTIIDYFINEYMAGHTPVPCTLCNNYLKWPLLKKISDEMGIYHFATGHYVRRRFINGCYHITTGVDPDKDQSFFLWGLPQEILQRMLLPMGNLTKARVREIAAERGFLKAAHKRDSLGVCFCPMDYRTFLHKELPEGSILPGKFFDEMGNFIARHKGYPFYTIGQRRGLGIDLNRAVFVKEIIPAENKVILSDLKALEKTEMRLKEWHITNPALLLNKDDIIVKIRYRKQANRCTVTLQPDNTLHVQLHEPLTAIAPGQAAAFYRDDVVLGGGIII.

Residues 13–20 (GMSGGTDS) and Phe-39 contribute to the ATP site. The Nucleophile role is filled by Cys-98. Cys-98 and Cys-195 are joined by a disulfide. Gly-122 contacts ATP. The interaction with tRNA stretch occupies residues 144-146 (KDQ). Catalysis depends on Cys-195, which acts as the Cysteine persulfide intermediate. Residues 301 to 302 (RY) are interaction with tRNA.

This sequence belongs to the MnmA/TRMU family.

It is found in the cytoplasm. It carries out the reaction S-sulfanyl-L-cysteinyl-[protein] + uridine(34) in tRNA + AH2 + ATP = 2-thiouridine(34) in tRNA + L-cysteinyl-[protein] + A + AMP + diphosphate + H(+). In terms of biological role, catalyzes the 2-thiolation of uridine at the wobble position (U34) of tRNA, leading to the formation of s(2)U34. In Phocaeicola vulgatus (strain ATCC 8482 / DSM 1447 / JCM 5826 / CCUG 4940 / NBRC 14291 / NCTC 11154) (Bacteroides vulgatus), this protein is tRNA-specific 2-thiouridylase MnmA 2.